Consider the following 158-residue polypeptide: Transcription antitermination protein NusB (158 aa).

Residues Met1–Gly12 show a composition bias toward basic and acidic residues. The segment at Met1–Arg20 is disordered.

The protein belongs to the NusB family.

In terms of biological role, involved in transcription antitermination. Required for transcription of ribosomal RNA (rRNA) genes. Binds specifically to the boxA antiterminator sequence of the ribosomal RNA (rrn) operons. This chain is Transcription antitermination protein NusB, found in Nitrosospira multiformis (strain ATCC 25196 / NCIMB 11849 / C 71).